The sequence spans 62 residues: MTIAFQLAVFALISTSLILLIGVPVVFASPEGWSSNKNIVFSGTSLWIGLVFLVGILNSLIS.

2 consecutive transmembrane segments (helical) span residues A8–A28 and F41–I61.

The protein belongs to the PsbZ family. In terms of assembly, PSII is composed of 1 copy each of membrane proteins PsbA, PsbB, PsbC, PsbD, PsbE, PsbF, PsbH, PsbI, PsbJ, PsbK, PsbL, PsbM, PsbT, PsbY, PsbZ, Psb30/Ycf12, at least 3 peripheral proteins of the oxygen-evolving complex and a large number of cofactors. It forms dimeric complexes.

It localises to the plastid. Its subcellular location is the chloroplast thylakoid membrane. May control the interaction of photosystem II (PSII) cores with the light-harvesting antenna, regulates electron flow through the 2 photosystem reaction centers. PSII is a light-driven water plastoquinone oxidoreductase, using light energy to abstract electrons from H(2)O, generating a proton gradient subsequently used for ATP formation. This chain is Photosystem II reaction center protein Z, found in Pelargonium hortorum (Common geranium).